Consider the following 164-residue polypeptide: Ubiquitin-fold modifier-conjugating enzyme 1 (164 aa).

The active-site Glycyl thioester intermediate is C116.

The protein belongs to the ubiquitin-conjugating enzyme family. UFC1 subfamily.

Functionally, E2-like enzyme which forms an intermediate with UFM1 via a thioester linkage. This Drosophila sechellia (Fruit fly) protein is Ubiquitin-fold modifier-conjugating enzyme 1.